The chain runs to 492 residues: uncharacterized protein (492 aa).

266 to 273 serves as a coordination point for ATP; it reads GIQGTGKS.

The protein belongs to the AAA ATPase family. Highly divergent.

The protein localises to the plastid. The protein resides in the chloroplast. This is an uncharacterized protein from Pyropia yezoensis (Susabi-nori).